We begin with the raw amino-acid sequence, 225 residues long: Urease accessory protein UreF (225 aa).

This sequence belongs to the UreF family. As to quaternary structure, ureD, UreF and UreG form a complex that acts as a GTP-hydrolysis-dependent molecular chaperone, activating the urease apoprotein by helping to assemble the nickel containing metallocenter of UreC. The UreE protein probably delivers the nickel.

It localises to the cytoplasm. Its function is as follows. Required for maturation of urease via the functional incorporation of the urease nickel metallocenter. The polypeptide is Urease accessory protein UreF (Geobacillus kaustophilus (strain HTA426)).